The following is a 472-amino-acid chain: Replicative helicase loading/DNA remodeling protein DnaB (472 aa).

Residues 1-112 form a DDBH1 region; it reads MADYWKDVLP…ERLFIYELLP (112 aa). The DDBH2-1 stretch occupies residues 210–302; the sequence is DLFLAGLSET…VHLREGEQPA (93 aa). The segment at 303–411 is DDBH2-2; that stretch reads EEDSLDGKLI…RQYLEWAEGK (109 aa). The disordered stretch occupies residues 415-472; it reads SKRNQKVIREEKLPDWMTEKETASDSESGQQKLHPQDLEEQKKKMMEEMQKLKKYSAY. 2 stretches are compositionally biased toward basic and acidic residues: residues 421 to 437 and 448 to 465; these read VIREEKLPDWMTEKETA and HPQDLEEQKKKMMEEMQK.

This sequence belongs to the DnaB/DnaD family. Homotetramer. Also forms higher-order oligomers, can be induced by some ssDNA. The DNA replisome assembles sequentially on oriC in this order; DnaA, DnaD, DnaB, DnaI-DnaC helicase. In atomic force microscopy forms a square with a small central hole. Part of the replication restart primosome which assembles in this order; PriA, DnaD then DnaB. The preferred DNA substrate mimics an arrested DNA replication fork with unreplicated lagging strand. Interacts with DnaC, but probably not as a tetramer. Interacts with DnaD but no interaction with PriA was seen. Interacts with cell cycle regulator CcrZ. In terms of processing, in early growth phase only full-length protein is detected, during late growth and stationary phase full-length and C-terminally truncated proteins are seen (at protein level). Truncated protein is only seen in cytoplasmic fractions.

It is found in the cytoplasm. The protein localises to the cell membrane. Its function is as follows. Helps DnaI load the DnaC replicative helicase onto single-stranded (ss)DNA. During DNA replication from the origin of replication (oriC) in the DNA replisome, DnaD is required after DnaA, before DnaB and before subsequent helicase DnaC loading. Component of the replication restart primosome, which reloads the replicative helicase on sites other than oriC. DnaB, DnaD and DnaI may also be required for a PriA-independent pathway of replication fork restart. DnaB and DnaD work together to allow DnaB access to ssDNA. DNA replication at oriC might originate on the inner face of the cell membrane; DnaB is essential for both replication initiation and cell membrane attachment of the origin region of the chromosome and plasmids. Weakly binds ssDNA, preferentially binds double-stranded (ds)DNA, and replication fork-like substrates. Remodels DNA, laterally compacts supercoiled plasmid and linear DNA, forms beads along the dsDNA. Together DnaB and DnaD form bipolar complexes on plasmid DNA. DnaB and DnaD are also required to load helicase on the repN plasmid origin of replication (oriN). The protein is Replicative helicase loading/DNA remodeling protein DnaB of Bacillus subtilis (strain 168).